The chain runs to 605 residues: FAD-linked oxidoreductase easE (605 aa).

An N-terminal signal peptide occupies residues 1–20 (MRHFVTFVVGFLLSWGFLSS). Asn-46 and Asn-105 each carry an N-linked (GlcNAc...) asparagine glycan. The FAD-binding PCMH-type domain occupies 122 to 307 (CHQGRLPLYS…TQATVRAFPD (186 aa)). A glycan (N-linked (GlcNAc...) asparagine) is linked at Asn-370.

Belongs to the oxygen-dependent FAD-linked oxidoreductase family. Requires FAD as cofactor.

The protein operates within alkaloid biosynthesis; ergot alkaloid biosynthesis. FAD-linked oxidoreductase; part of the gene cluster that mediates the biosynthesis of fungal ergot alkaloid ergovaline, the predominant ergopeptine product in E.festucae var. lolii. DmaW catalyzes the first step of ergot alkaloid biosynthesis by condensing dimethylallyl diphosphate (DMAP) and tryptophan to form 4-dimethylallyl-L-tryptophan. The second step is catalyzed by the methyltransferase easF that methylates 4-dimethylallyl-L-tryptophan in the presence of S-adenosyl-L-methionine, resulting in the formation of 4-dimethylallyl-L-abrine. The catalase easC and the FAD-dependent oxidoreductase easE then transform 4-dimethylallyl-L-abrine to chanoclavine-I which is further oxidized by easD in the presence of NAD(+), resulting in the formation of chanoclavine-I aldehyde. Agroclavine dehydrogenase easG then mediates the conversion of chanoclavine-I aldehyde to agroclavine via a non-enzymatic adduct reaction: the substrate is an iminium intermediate that is formed spontaneously from chanoclavine-I aldehyde in the presence of glutathione. The presence of easA is not required to complete this reaction. Further conversion of agroclavine to paspalic acid is a two-step process involving oxidation of agroclavine to elymoclavine and of elymoclavine to paspalic acid, the second step being performed by the elymoclavine oxidase cloA. Paspalic acid is then further converted to D-lysergic acid. Ergovaline is assembled from D-lysergic acid and three different amino acids by the D-lysergyl-peptide-synthetase composed of a monomudular (lpsB) and a trimodular (lpsA) nonribosomal peptide synthetase subunit. The protein is FAD-linked oxidoreductase easE of Epichloe festucae var. lolii (Neotyphodium lolii).